The chain runs to 213 residues: Endoplasmic reticulum vesicle protein 25 (213 aa).

An N-terminal signal peptide occupies residues 1–20 (MILRIPSLLYLFTLLTAVYA). Residues 21-181 (VKFDLTSDRN…TNESTNQRVK (161 aa)) lie on the Lumenal side of the membrane. The region spanning 33–122 (PSIIWNFASA…VRSVELDVDI (90 aa)) is the GOLD domain. A helical transmembrane segment spans residues 182–202 (VFSVLIICCTIGLGVWQLLHL). Residues 203–213 (RSFFKRKYLID) lie on the Cytoplasmic side of the membrane.

This sequence belongs to the EMP24/GP25L family.

It localises to the endoplasmic reticulum membrane. The protein localises to the golgi apparatus membrane. Constituent of COPII-coated endoplasmic reticulum-derived transport vesicles. Required for efficient transport of a subset of secretory proteins to the Golgi. Facilitates retrograde transport from the Golgi to the endoplasmic reticulum. The protein is Endoplasmic reticulum vesicle protein 25 (ERV25) of Cryptococcus neoformans var. neoformans serotype D (strain B-3501A) (Filobasidiella neoformans).